A 471-amino-acid polypeptide reads, in one-letter code: 3-isopropylmalate dehydratase large subunit (471 aa).

Cys347, Cys407, and Cys410 together coordinate [4Fe-4S] cluster.

It belongs to the aconitase/IPM isomerase family. LeuC type 1 subfamily. Heterodimer of LeuC and LeuD. [4Fe-4S] cluster is required as a cofactor.

The catalysed reaction is (2R,3S)-3-isopropylmalate = (2S)-2-isopropylmalate. It functions in the pathway amino-acid biosynthesis; L-leucine biosynthesis; L-leucine from 3-methyl-2-oxobutanoate: step 2/4. Catalyzes the isomerization between 2-isopropylmalate and 3-isopropylmalate, via the formation of 2-isopropylmaleate. The polypeptide is 3-isopropylmalate dehydratase large subunit (Geobacillus sp. (strain WCH70)).